We begin with the raw amino-acid sequence, 106 residues long: Small ribosomal subunit protein uS10 (106 aa).

The protein belongs to the universal ribosomal protein uS10 family. Part of the 30S ribosomal subunit.

Functionally, involved in the binding of tRNA to the ribosomes. The polypeptide is Small ribosomal subunit protein uS10 (Archaeoglobus fulgidus (strain ATCC 49558 / DSM 4304 / JCM 9628 / NBRC 100126 / VC-16)).